The primary structure comprises 425 residues: Trigger factor (425 aa).

The PPIase FKBP-type domain maps to 163-248 (GDTAVIDFEG…IHEIKTKELP (86 aa)).

Belongs to the FKBP-type PPIase family. Tig subfamily.

The protein localises to the cytoplasm. The catalysed reaction is [protein]-peptidylproline (omega=180) = [protein]-peptidylproline (omega=0). Involved in protein export. Acts as a chaperone by maintaining the newly synthesized protein in an open conformation. Functions as a peptidyl-prolyl cis-trans isomerase. The chain is Trigger factor from Bacillus cereus (strain G9842).